Here is a 3971-residue protein sequence, read N- to C-terminus: Mycosubtilin synthase subunit A (3971 aa).

Positions Glu-160–Val-479 are acyl-CoA ligase. A Carrier 1 domain is found at Thr-578–His-653. Ser-613 is subject to O-(pantetheine 4'-phosphoryl)serine. One can recognise a Ketosynthase family 3 (KS3) domain in the interval Ser-669–Glu-1092. Residues Cys-843, His-974, and His-1014 each act as for beta-ketoacyl synthase activity in the active site. One can recognise a Carrier 2 domain in the interval Thr-1290–Val-1365. Ser-1324 carries the O-(pantetheine 4'-phosphoryl)serine modification. The segment at Glu-1434–Ala-1456 is disordered. Residues Asp-1440–Ala-1456 are compositionally biased toward polar residues. Positions Ile-1529 to Ile-1856 are GSA-AT. Lys-1759 is modified (N6-(pyridoxal phosphate)lysine). The disordered stretch occupies residues Gly-1921–Tyr-1942. Residues Glu-1938–Ser-2240 are condensation 1. The 76-residue stretch at Glu-2405–Lys-2480 folds into the Carrier 3 domain. The residue at position 2440 (Ser-2440) is an O-(pantetheine 4'-phosphoryl)serine. Positions Gln-2492–Gln-2781 are condensation 2. Residues Pro-2937–Phe-3823 are domain 1 (asparagine-activating). Residues Thr-2967–Val-3364 are adenylation 1. Residues Pro-3442 to Glu-3517 form the Carrier 4 domain. The residue at position 3477 (Ser-3477) is an O-(pantetheine 4'-phosphoryl)serine. Residues Lys-3529–Ala-3818 are condensation 3.

The protein belongs to the ATP-dependent AMP-binding enzyme family. The cofactor is pyridoxal 5'-phosphate. It depends on pantetheine 4'-phosphate as a cofactor.

This protein is a multifunctional enzyme, able to activate a long chain fatty acid and link it with the amino acid Asn as part of the synthesis of mycosubtilin. The activation sites consist of individual domains. In Bacillus subtilis, this protein is Mycosubtilin synthase subunit A (mycA).